A 433-amino-acid polypeptide reads, in one-letter code: Aspartate--tRNA(Asp/Asn) ligase (433 aa).

An L-aspartate-binding site is contributed by E167. An aspartate region spans residues 189-192 (QLFK). R211 is a binding site for L-aspartate. Residues 211–213 (RAE), 219–221 (RHL), and E356 contribute to the ATP site. Positions 356 and 359 each coordinate Mg(2+). Residues S359 and R363 each coordinate L-aspartate. Residue 404–407 (GGER) participates in ATP binding.

Belongs to the class-II aminoacyl-tRNA synthetase family. Type 2 subfamily. Homodimer. It depends on Mg(2+) as a cofactor.

Its subcellular location is the cytoplasm. The enzyme catalyses tRNA(Asx) + L-aspartate + ATP = L-aspartyl-tRNA(Asx) + AMP + diphosphate. Its function is as follows. Aspartyl-tRNA synthetase with relaxed tRNA specificity since it is able to aspartylate not only its cognate tRNA(Asp) but also tRNA(Asn). Reaction proceeds in two steps: L-aspartate is first activated by ATP to form Asp-AMP and then transferred to the acceptor end of tRNA(Asp/Asn). In Natronomonas pharaonis (strain ATCC 35678 / DSM 2160 / CIP 103997 / JCM 8858 / NBRC 14720 / NCIMB 2260 / Gabara) (Halobacterium pharaonis), this protein is Aspartate--tRNA(Asp/Asn) ligase.